A 354-amino-acid polypeptide reads, in one-letter code: MMKMTMKMMVHIYFVSLLLLLFHSYAIDIENEITDFFNKMKDTLPAKDSKWLNPTCIFGGTMNNMAAIGEPFSAKCPPIEDSLLSRRYINKDNVVNWEKIGKTRRPLNRRVKNGDLWIANYTSNDSHRMYLCTVITKNGDCIQGIVRSHVRKPSSCIPEIYELGTHDKYGIDLYCGIIYAKHYNNITWYKDNKEINIDDIKYSQTGKELIIHNPALEDSGRYDCYVHYDDVRIKNDIVVSRCKILTVIPSQDHRFKLILDSKINVIIGEPANITCTAVSTSLLFDDVLIEWENPSGWLIGFDFDVYSVLTSRGGITEATLYFKNVTEEYIGNTYKCRGHNYYFEKTLTTTVVLE.

The first 22 residues, 1 to 22, serve as a signal peptide directing secretion; the sequence is MMKMTMKMMVHIYFVSLLLLLF. Ig-like C2-type domains are found at residues 68 to 150 and 158 to 240; these read IGEP…RSHV and PEIY…IVVS. Intrachain disulfides connect Cys76–Cys132 and Cys175–Cys224. Residues Asn120, Asn124, Asn185, Asn272, and Asn324 are each glycosylated (N-linked (GlcNAc...) asparagine; by host). One can recognise an Ig-like V-type domain in the interval 249–348; sequence PSQDHRFKLI…HNYYFEKTLT (100 aa). Cys275 and Cys336 are disulfide-bonded.

The protein belongs to the interleukin-1 receptor family. As to quaternary structure, interacts with host IFNA1.

Its subcellular location is the secreted. Its function is as follows. Counteracts the antiviral effects of host IFN-alpha/beta and key IFN-inducible proteins involved in viral RNA degradation suxh as host OAS1. Acts as a soluble IFN-alpha receptor and thus inhibits the interaction between host IFN-alpha and its receptor. The protein is Soluble interferon alpha/beta receptor OPG204 (OPG204) of Homo sapiens (Human).